The following is a 230-amino-acid chain: MSIVIMTGTGTDVGKTVATGAVACVLQKEGYEPFIVKPAQTGEPEGEGDAPRVTALTGIDNAETLYRFPEPLAPATSARRANMPYPELTTVAEEIKSFDKPGRVVLVEGAGGLLVRIGQDWTIADLARELGAPIIVVCSTGLGSLNEAELTVEAATRRGLTVLGLIGGSIPDSPDLATRCNKEDLPVVTGTDVLGYIPEGAGGWSQQRFVQEAPGFFVPDVVGRVTRESD.

ATP is bound at residue 12 to 17 (DVGKTV). Mg(2+) is bound at residue threonine 16. Lysine 37 is a catalytic residue. Threonine 41 contributes to the substrate binding site. ATP contacts are provided by residues aspartate 49, 108–111 (EGAG), 168–169 (GS), and 198–200 (PEG). Positions 49 and 108 each coordinate Mg(2+).

This sequence belongs to the dethiobiotin synthetase family. As to quaternary structure, homodimer. Mg(2+) serves as cofactor.

It is found in the cytoplasm. The enzyme catalyses (7R,8S)-7,8-diammoniononanoate + CO2 + ATP = (4R,5S)-dethiobiotin + ADP + phosphate + 3 H(+). It functions in the pathway cofactor biosynthesis; biotin biosynthesis; biotin from 7,8-diaminononanoate: step 1/2. Catalyzes a mechanistically unusual reaction, the ATP-dependent insertion of CO2 between the N7 and N8 nitrogen atoms of 7,8-diaminopelargonic acid (DAPA, also called 7,8-diammoniononanoate) to form a ureido ring. The sequence is that of ATP-dependent dethiobiotin synthetase BioD from Corynebacterium kroppenstedtii (strain DSM 44385 / JCM 11950 / CIP 105744 / CCUG 35717).